A 189-amino-acid polypeptide reads, in one-letter code: TATA-box-binding protein 1 (189 aa).

Tandem repeats lie at residues 10 to 86 (IENV…FDKL) and 101 to 179 (VQNI…ISRL).

Belongs to the TBP family.

Its function is as follows. General factor that plays a role in the activation of archaeal genes transcribed by RNA polymerase. Binds specifically to the TATA box promoter element which lies close to the position of transcription initiation. In Haloferax volcanii (strain ATCC 29605 / DSM 3757 / JCM 8879 / NBRC 14742 / NCIMB 2012 / VKM B-1768 / DS2) (Halobacterium volcanii), this protein is TATA-box-binding protein 1 (tbp1).